The primary structure comprises 156 residues: SsrA-binding protein (156 aa).

It belongs to the SmpB family.

The protein resides in the cytoplasm. Its function is as follows. Required for rescue of stalled ribosomes mediated by trans-translation. Binds to transfer-messenger RNA (tmRNA), required for stable association of tmRNA with ribosomes. tmRNA and SmpB together mimic tRNA shape, replacing the anticodon stem-loop with SmpB. tmRNA is encoded by the ssrA gene; the 2 termini fold to resemble tRNA(Ala) and it encodes a 'tag peptide', a short internal open reading frame. During trans-translation Ala-aminoacylated tmRNA acts like a tRNA, entering the A-site of stalled ribosomes, displacing the stalled mRNA. The ribosome then switches to translate the ORF on the tmRNA; the nascent peptide is terminated with the 'tag peptide' encoded by the tmRNA and targeted for degradation. The ribosome is freed to recommence translation, which seems to be the essential function of trans-translation. This chain is SsrA-binding protein, found in Clostridium perfringens (strain 13 / Type A).